Consider the following 242-residue polypeptide: Phosphoribosylaminoimidazole-succinocarboxamide synthase (242 aa).

It belongs to the SAICAR synthetase family.

It catalyses the reaction 5-amino-1-(5-phospho-D-ribosyl)imidazole-4-carboxylate + L-aspartate + ATP = (2S)-2-[5-amino-1-(5-phospho-beta-D-ribosyl)imidazole-4-carboxamido]succinate + ADP + phosphate + 2 H(+). It functions in the pathway purine metabolism; IMP biosynthesis via de novo pathway; 5-amino-1-(5-phospho-D-ribosyl)imidazole-4-carboxamide from 5-amino-1-(5-phospho-D-ribosyl)imidazole-4-carboxylate: step 1/2. The chain is Phosphoribosylaminoimidazole-succinocarboxamide synthase from Magnetococcus marinus (strain ATCC BAA-1437 / JCM 17883 / MC-1).